Reading from the N-terminus, the 151-residue chain is MLP-like protein 329 (151 aa).

It belongs to the MLP family.

The protein is MLP-like protein 329 (MLP329) of Arabidopsis thaliana (Mouse-ear cress).